The sequence spans 268 residues: D-alanyl-D-alanine carboxypeptidase (268 aa).

A helical transmembrane segment spans residues 25 to 47; that stretch reads AFLWAFIISFTVCTLFLGWRLVS. Residues Q151, 179–181, and S186 contribute to the substrate site; that span reads WVA. Residues H188 and D195 each coordinate Zn(2+). E238 serves as the catalytic Proton donor/acceptor. Zn(2+) is bound at residue H241.

It belongs to the peptidase M15B family. In terms of assembly, monomer. Zn(2+) serves as cofactor.

The protein resides in the cell membrane. Carboxypeptidase activity is insensitive to beta-lactams since it is not affected by penicillin G or ampicillin and is inhibited only by very high concentrations of cefalotin and cefoxitin. Carboxypeptidase that cleaves the C-terminal D-alanine residue from the peptidoglycan-derived pentapeptide L-Ala-gamma-D-Glu-L-Lys-D-Ala-D-Ala in vitro. Therefore, should contribute in vivo to the hydrolysis of the D-alanyl-D-alanine-containing peptidoglycan precursors. May increase the level of glycopeptide antibiotics resistance by decreasing the availability of D-Ala-D-Ala termini from the cell surface, which constitute the antibiotic target residues. This chain is D-alanyl-D-alanine carboxypeptidase, found in Enterococcus faecalis (strain ATCC 700802 / V583).